Reading from the N-terminus, the 117-residue chain is Large ribosomal subunit protein bL20c (117 aa).

Belongs to the bacterial ribosomal protein bL20 family.

Its subcellular location is the plastid. The protein localises to the chloroplast. Binds directly to 23S ribosomal RNA and is necessary for the in vitro assembly process of the 50S ribosomal subunit. It is not involved in the protein synthesizing functions of that subunit. The protein is Large ribosomal subunit protein bL20c of Lobularia maritima (Sweet alyssum).